Here is a 77-residue protein sequence, read N- to C-terminus: U14-theraphotoxin-Cg1a 1 (77 aa).

Positions 1 to 21 (MKTSVLLVILGIAAITVQCTA) are cleaved as a signal peptide. A propeptide spanning residues 22 to 49 (SESVEQDSLRTFVDAVLGWNAEMASEAR) is cleaved from the precursor. Intrachain disulfides connect Cys-50-Cys-64, Cys-57-Cys-69, and Cys-63-Cys-75. Lys-77 carries the lysine amide modification.

This sequence belongs to the neurotoxin 10 (Hwtx-1) family. 65 (Jztx-21) subfamily. In terms of tissue distribution, expressed by the venom gland.

The protein localises to the secreted. Its function is as follows. Probable ion channel inhibitor. The protein is U14-theraphotoxin-Cg1a 1 of Chilobrachys guangxiensis (Chinese earth tiger tarantula).